A 328-amino-acid chain; its full sequence is DNA-directed RNA polymerase subunit alpha (328 aa).

Residues 1–230 (MSNHGLQMPE…DHVSFFIQLE (230 aa)) are alpha N-terminal domain (alpha-NTD). The interval 248–328 (RIRELLAQPV…EEYLEEKKAS (81 aa)) is alpha C-terminal domain (alpha-CTD).

It belongs to the RNA polymerase alpha chain family. Homodimer. The RNAP catalytic core consists of 2 alpha, 1 beta, 1 beta' and 1 omega subunit. When a sigma factor is associated with the core the holoenzyme is formed, which can initiate transcription.

It carries out the reaction RNA(n) + a ribonucleoside 5'-triphosphate = RNA(n+1) + diphosphate. Functionally, DNA-dependent RNA polymerase catalyzes the transcription of DNA into RNA using the four ribonucleoside triphosphates as substrates. In Salinibacter ruber (strain DSM 13855 / M31), this protein is DNA-directed RNA polymerase subunit alpha.